The primary structure comprises 384 residues: tRNA-specific 2-thiouridylase MnmA (384 aa).

The segment at 1–26 is disordered; that stretch reads MDEGIRASGGIRACQTGKQKQGRKRP. ATP is bound by residues 36–43 and Met-62; that span reads GMSGGVDS. The segment at 122–124 is interaction with target base in tRNA; it reads NPD. The Nucleophile role is filled by Cys-127. Residues Cys-127 and Cys-223 are joined by a disulfide bond. Gly-151 is a binding site for ATP. The segment at 173-175 is interaction with tRNA; that stretch reads KDQ. The active-site Cysteine persulfide intermediate is the Cys-223. The interaction with tRNA stretch occupies residues 334 to 335; the sequence is RY.

This sequence belongs to the MnmA/TRMU family.

Its subcellular location is the cytoplasm. It carries out the reaction S-sulfanyl-L-cysteinyl-[protein] + uridine(34) in tRNA + AH2 + ATP = 2-thiouridine(34) in tRNA + L-cysteinyl-[protein] + A + AMP + diphosphate + H(+). Functionally, catalyzes the 2-thiolation of uridine at the wobble position (U34) of tRNA, leading to the formation of s(2)U34. In Chromobacterium violaceum (strain ATCC 12472 / DSM 30191 / JCM 1249 / CCUG 213 / NBRC 12614 / NCIMB 9131 / NCTC 9757 / MK), this protein is tRNA-specific 2-thiouridylase MnmA.